Consider the following 1461-residue polypeptide: Pleiotropic drug resistance protein 2 (1461 aa).

The ABC transporter 1 domain occupies L172 to E445. Residue G205–T212 coordinates ATP. An ABC transmembrane type-2 1 domain is found at E523–F736. Helical transmembrane passes span F541–F561, F577–A597, L622–L642, L660–A680, V685–I705, and I771–L791. An ABC transporter 2 domain is found at L859–P1111. G904–T911 provides a ligand contact to ATP. The ABC transmembrane type-2 2 domain maps to T1184–V1398. The next 7 membrane-spanning stretches (helical) occupy residues Y1203–W1223, Y1243–I1263, T1291–Y1311, F1321–A1341, I1348–I1368, W1379–G1399, and F1430–A1450.

Belongs to the ABC transporter superfamily. ABCG family. PDR (TC 3.A.1.205) subfamily.

It localises to the membrane. Functionally, may be a general defense protein. The polypeptide is Pleiotropic drug resistance protein 2 (PDR2) (Nicotiana plumbaginifolia (Leadwort-leaved tobacco)).